The primary structure comprises 358 residues: Methionine aminopeptidase 2 (358 aa).

Histidine 109 serves as a coordination point for substrate. A divalent metal cation contacts are provided by aspartate 130, aspartate 141, and histidine 210. Residue histidine 218 participates in substrate binding. Positions 243 and 339 each coordinate a divalent metal cation.

Belongs to the peptidase M24A family. Methionine aminopeptidase eukaryotic type 2 subfamily. Requires Co(2+) as cofactor. It depends on Zn(2+) as a cofactor. Mn(2+) serves as cofactor. Fe(2+) is required as a cofactor.

Its subcellular location is the cytoplasm. The enzyme catalyses Release of N-terminal amino acids, preferentially methionine, from peptides and arylamides.. Cotranslationally removes the N-terminal methionine from nascent proteins. The N-terminal methionine is often cleaved when the second residue in the primary sequence is small and uncharged (Met-Ala-, Cys, Gly, Pro, Ser, Thr, or Val). The sequence is that of Methionine aminopeptidase 2 from Encephalitozoon cuniculi (strain GB-M1) (Microsporidian parasite).